Reading from the N-terminus, the 566-residue chain is Myo-inositol transporter 1A (566 aa).

The Cytoplasmic portion of the chain corresponds to 1–64 (MSDEKNYGIS…ERTEKLTKFV (64 aa)). A helical transmembrane segment spans residues 65-85 (VGLALFASVSGFCFGFDTGVI). Residues 86–106 (SAALVSIKDDFGHILDDTEKE) are Extracellular-facing. A helical membrane pass occupies residues 107 to 127 (WISAATSCGALVGALSSGALA). Residues 128–140 (DRVGRKWTLAVGD) are Cytoplasmic-facing. Residues 141–161 (VWFTLGAIIICSSFSVVQMIV) form a helical membrane-spanning segment. Residues 162 to 163 (GR) are Extracellular-facing. Residues 164 to 184 (AVLGLGVGTAAAIAPLYIAEV) traverse the membrane as a helical segment. At 185-192 (APTRFRGA) the chain is on the cytoplasmic side. The chain crosses the membrane as a helical span at residues 193–213 (LVTVQSIAITGGQFFSYCIGI). Residues 214–222 (PLTGHNGWR) are Extracellular-facing. Residues 223 to 243 (IQFAIGIVPAVVQAAVVHFLP) traverse the membrane as a helical segment. At 244-313 (ESPRYDLLRG…VLTEGKYRKP (70 aa)) the chain is on the cytoplasmic side. Residues 314–334 (AITALGIGIFQQLCGFNSLMY) form a helical membrane-spanning segment. Residues 335 to 349 (YAATIFSYAGFDNPT) lie on the Extracellular side of the membrane. A helical membrane pass occupies residues 350–370 (SVGLIVSGTNWFFTFVAMMIL). Residues 371-377 (DRVGKRR) are Cytoplasmic-facing. The helical transmembrane segment at 378 to 398 (ILLSTYPGMIAGLALASVAFW) threads the bilayer. Residues 399–421 (KMTGSTGHRLVEGTEYPQQWSNM) are Extracellular-facing. Residues 422–442 (MLGMMVVFIAFYATGSGNITW) traverse the membrane as a helical segment. Topologically, residues 443–458 (TVGEMFPLEMRGIGAS) are cytoplasmic. Residues 459-479 (ILAGGVWAANIVISATFLTLM) form a helical membrane-spanning segment. The Extracellular segment spans residues 480–485 (NAIGPT). A helical transmembrane segment spans residues 486–506 (PTFALYAGICLAGLIFIYFCY). The Cytoplasmic portion of the chain corresponds to 507-566 (PEPSGLSLEEIQIIYNYGFGVQKSREIRAEHKLKAQEMRDRANSHIGGSATASDDQLNKV). Residues 546–566 (DRANSHIGGSATASDDQLNKV) are disordered. Over residues 556-566 (ATASDDQLNKV) the composition is skewed to polar residues.

This sequence belongs to the major facilitator superfamily. Sugar transporter (TC 2.A.1.1) family.

It is found in the cell membrane. It catalyses the reaction myo-inositol(out) + H(+)(out) = myo-inositol(in) + H(+)(in). Major transporter for myo-inositol. Plays a role in the traversal of the host blood-brain barrier. This Cryptococcus neoformans var. grubii serotype A (strain H99 / ATCC 208821 / CBS 10515 / FGSC 9487) (Filobasidiella neoformans var. grubii) protein is Myo-inositol transporter 1A.